A 116-amino-acid polypeptide reads, in one-letter code: Large ribosomal subunit protein bL17 (116 aa).

This sequence belongs to the bacterial ribosomal protein bL17 family. As to quaternary structure, part of the 50S ribosomal subunit. Contacts protein L32.

The chain is Large ribosomal subunit protein bL17 from Dictyoglomus thermophilum (strain ATCC 35947 / DSM 3960 / H-6-12).